Reading from the N-terminus, the 253-residue chain is PAXIP1-associated glutamate-rich protein 1 (253 aa).

Disordered stretches follow at residues 1–109 (MSLV…MPPP) and 128–253 (QAEI…QRKY). Basic and acidic residues predominate over residues 51 to 62 (EGGREEAEHEGS). Residues 116 to 160 (YELLAAHGTLELQAEILPRRPPTPEAQSEEERSDEEPEAKEEEEE) are sufficient for interaction with NCOA1. Thr138 carries the phosphothreonine modification. Positions 142-159 (QSEEERSDEEPEAKEEEE) are enriched in acidic residues. Phosphoserine occurs at positions 143 and 148. Positions 161–253 (KPHMPTEFDF…GSLFPRQRKY (93 aa)) are sufficient for interaction with ESR1. Residues 195 to 223 (QKREARLDKVLSDMKRHKKLEEQILRTGR) show a composition bias toward basic and acidic residues. Residue Ser237 is modified to Phosphoserine.

As to quaternary structure, component of the KMT2 family MLL2/MLL3 complex, at least composed of the histone methyltransferases KMT2D and/or KMT2C, the common complex subunits ASH2L, RBBP5, WDR5 and DPY30, and the complex type-specific subunits PAXIP1/PTIP, PAGR1, NCOA6 and KDM6A; PAXIP1 is required for the association with the MLL2/MLL3 complex. Forms a constitutive complex with PAXIP1/PTIP independently of the MLL2/MLL3 complex. Interacts with NCOA1, ESR1, NR3C1, AR.

The protein resides in the nucleus. Its function is as follows. Its association with the histone methyltransferase MLL2/MLL3 complex is suggesting a role in epigenetic transcriptional activation. However, in association with PAXIP1/PTIP is proposed to function at least in part independently of the MLL2/MLL3 complex. Proposed to be recruited by PAXIP1 to sites of DNA damage where the PAGR1:PAXIP1 complex is required for cell survival in response to DNA damage independently of the MLL2/MLL3 complex. However, its function in DNA damage has been questioned. During immunoglobulin class switching in activated B-cells is involved in transcription regulation of downstream switch regions at the immunoglobulin heavy-chain (Igh) locus independently of the MLL2/MLL3 complex. Involved in both estrogen receptor-regulated gene transcription and estrogen-stimulated G1/S cell-cycle transition. Acts as a transcriptional cofactor for nuclear hormone receptors. Inhibits the induction properties of several steroid receptors such as NR3C1, AR and PPARG; the mechanism of inhibition appears to be gene-dependent. The sequence is that of PAXIP1-associated glutamate-rich protein 1 (PAGR1) from Bos taurus (Bovine).